The primary structure comprises 1055 residues: Pre-mRNA-splicing factor ATP-dependent RNA helicase-like protein cdc28 (1055 aa).

Basic and acidic residues predominate over residues 67–78 (PREGSRPKENYN). The segment at 67-184 (PREGSRPKEN…TERLNDLRER (118 aa)) is disordered. Residues 112–121 (PLKKKSRSKT) are compositionally biased toward basic residues. Residues 122–132 (PKREIARRQRD) are compositionally biased toward basic and acidic residues. The segment covering 133–145 (EDEWESDEYEEVV) has biased composition (acidic residues). The span at 163 to 184 (QNHDYEKSSDPETERLNDLRER) shows a compositional bias: basic and acidic residues. Positions 428-592 (LKAINEYQVL…FDEAPVFYVP (165 aa)) constitute a Helicase ATP-binding domain. 441–448 (AETGSGKT) is an ATP binding site. The DEAH box motif lies at 539 to 542 (DEAH). Residues 617 to 790 (TILQIHTTQP…NIVLLLKSLG (174 aa)) form the Helicase C-terminal domain.

This sequence belongs to the DEAD box helicase family. DEAH subfamily. DDX16/PRP8 sub-subfamily.

Its subcellular location is the nucleus. The catalysed reaction is ATP + H2O = ADP + phosphate + H(+). Its function is as follows. Involved in pre-mRNA splicing. Is required together with ATP and at least one other factor, for the first cleavage-ligation reaction. Functions as a molecular motor in the activation of the precatalytic spliceosome for the first transesterification reaction of pre-mRNA splicing by hydrolyzing ATP to cause the activation of the spliceosome without the occurrence of splicing. This chain is Pre-mRNA-splicing factor ATP-dependent RNA helicase-like protein cdc28 (cdc28), found in Schizosaccharomyces pombe (strain 972 / ATCC 24843) (Fission yeast).